A 369-amino-acid chain; its full sequence is tRNA-specific 2-thiouridylase MnmA (369 aa).

ATP contacts are provided by residues 16-23 (AMSGGVDS) and methionine 42. Cysteine 110 serves as the catalytic Nucleophile. Cysteines 110 and 206 form a disulfide. Glycine 134 provides a ligand contact to ATP. Residues 156–158 (KDQ) form an interaction with tRNA region. Cysteine 206 (cysteine persulfide intermediate) is an active-site residue.

It belongs to the MnmA/TRMU family.

The protein localises to the cytoplasm. The catalysed reaction is S-sulfanyl-L-cysteinyl-[protein] + uridine(34) in tRNA + AH2 + ATP = 2-thiouridine(34) in tRNA + L-cysteinyl-[protein] + A + AMP + diphosphate + H(+). Catalyzes the 2-thiolation of uridine at the wobble position (U34) of tRNA, leading to the formation of s(2)U34. The sequence is that of tRNA-specific 2-thiouridylase MnmA from Orientia tsutsugamushi (strain Boryong) (Rickettsia tsutsugamushi).